A 198-amino-acid polypeptide reads, in one-letter code: Na(+)-translocating NADH-quinone reductase subunit E (198 aa).

6 helical membrane passes run 11-31 (AVFI…FLAV), 35-55 (VSTA…AVPV), 77-97 (FLNF…LEMV), 110-130 (GIFL…SFMV), 140-160 (IVYG…LAGL), and 176-196 (LGIT…FSGI).

The protein belongs to the NqrDE/RnfAE family. As to quaternary structure, composed of six subunits; NqrA, NqrB, NqrC, NqrD, NqrE and NqrF.

Its subcellular location is the cell inner membrane. The catalysed reaction is a ubiquinone + n Na(+)(in) + NADH + H(+) = a ubiquinol + n Na(+)(out) + NAD(+). In terms of biological role, NQR complex catalyzes the reduction of ubiquinone-1 to ubiquinol by two successive reactions, coupled with the transport of Na(+) ions from the cytoplasm to the periplasm. NqrA to NqrE are probably involved in the second step, the conversion of ubisemiquinone to ubiquinol. The sequence is that of Na(+)-translocating NADH-quinone reductase subunit E from Haemophilus influenzae (strain 86-028NP).